The primary structure comprises 103 residues: Protamine-2 (103 aa).

Residues 1 to 103 (MVRYRMRSLS…RTRRRRCRRY (103 aa)) form a disordered region. Phosphoserine occurs at positions 8 and 10. Residues 8–17 (SLSERPHEVH) show a composition bias toward basic and acidic residues. A compositionally biased stretch (low complexity) spans 23 to 35 (GQEQGHNGQEEQG). S37 bears the Phosphoserine mark. Positions 39 to 48 (EHVEVYERTH) are enriched in basic and acidic residues. Basic residues predominate over residues 51–103 (YSHHRRRRCSRRRLYRIHRRRHRSCRRRRRRSCRHRRRHRRGCRTRRRRCRRY).

It belongs to the protamine P2 family. Interacts with TDRP. Post-translationally, proteolytic processing into mature chains is required for histone eviction during spermatogenesis. Transition proteins (TNP1 and TNP2) are required for processing. As to expression, testis.

It is found in the nucleus. It localises to the chromosome. Its function is as follows. Protamines substitute for histones in the chromatin of sperm during the haploid phase of spermatogenesis. They compact sperm DNA into a highly condensed, stable and inactive complex. The polypeptide is Protamine-2 (PRM2) (Semnopithecus entellus (Northern plains gray langur)).